A 553-amino-acid chain; its full sequence is Dihydroxy-acid dehydratase (553 aa).

Aspartate 78 serves as a coordination point for Mg(2+). [2Fe-2S] cluster is bound at residue cysteine 119. 2 residues coordinate Mg(2+): aspartate 120 and lysine 121. The residue at position 121 (lysine 121) is an N6-carboxylysine. Cysteine 193 is a [2Fe-2S] cluster binding site. Position 441 (glutamate 441) interacts with Mg(2+). Serine 467 (proton acceptor) is an active-site residue.

The protein belongs to the IlvD/Edd family. As to quaternary structure, homodimer. [2Fe-2S] cluster is required as a cofactor. It depends on Mg(2+) as a cofactor.

The catalysed reaction is (2R)-2,3-dihydroxy-3-methylbutanoate = 3-methyl-2-oxobutanoate + H2O. The enzyme catalyses (2R,3R)-2,3-dihydroxy-3-methylpentanoate = (S)-3-methyl-2-oxopentanoate + H2O. It participates in amino-acid biosynthesis; L-isoleucine biosynthesis; L-isoleucine from 2-oxobutanoate: step 3/4. Its pathway is amino-acid biosynthesis; L-valine biosynthesis; L-valine from pyruvate: step 3/4. Functions in the biosynthesis of branched-chain amino acids. Catalyzes the dehydration of (2R,3R)-2,3-dihydroxy-3-methylpentanoate (2,3-dihydroxy-3-methylvalerate) into 2-oxo-3-methylpentanoate (2-oxo-3-methylvalerate) and of (2R)-2,3-dihydroxy-3-methylbutanoate (2,3-dihydroxyisovalerate) into 2-oxo-3-methylbutanoate (2-oxoisovalerate), the penultimate precursor to L-isoleucine and L-valine, respectively. This Pelobacter propionicus (strain DSM 2379 / NBRC 103807 / OttBd1) protein is Dihydroxy-acid dehydratase.